The sequence spans 416 residues: Peptide chain release factor subunit 1 (416 aa).

It belongs to the eukaryotic release factor 1 family. Heterodimer of two subunits, one of which binds GTP.

The protein localises to the cytoplasm. In terms of biological role, directs the termination of nascent peptide synthesis (translation) in response to the termination codons UAA, UAG and UGA. The sequence is that of Peptide chain release factor subunit 1 from Halobacterium salinarum (strain ATCC 29341 / DSM 671 / R1).